We begin with the raw amino-acid sequence, 372 residues long: Serine protease inhibitor 42Dd (372 aa).

The first 15 residues, 1 to 15 (MYYLCIFLWVTSVAC), serve as a signal peptide directing secretion. N-linked (GlcNAc...) asparagine glycosylation is found at N197 and N232.

This sequence belongs to the serpin family. As to expression, expressed in the ovary.

Its subcellular location is the secreted. Its function is as follows. Serine protease inhibitor with activity toward trypsin. Involved in innate immunity to fungal infection by negatively regulating the Toll signaling pathway and suppressing the expression of the antifungal peptide drosomycin. Acts upstream of SPE and grass, and downstream of the fungal cell wall pattern recognition receptor GNBP3. May function specifically in the GNBP3-dependent beta-1,3-glucan branch of the Toll pathway. The polypeptide is Serine protease inhibitor 42Dd (Drosophila melanogaster (Fruit fly)).